A 448-amino-acid chain; its full sequence is Exodeoxyribonuclease 7 large subunit (448 aa).

It belongs to the XseA family. Heterooligomer composed of large and small subunits.

Its subcellular location is the cytoplasm. The enzyme catalyses Exonucleolytic cleavage in either 5'- to 3'- or 3'- to 5'-direction to yield nucleoside 5'-phosphates.. Its function is as follows. Bidirectionally degrades single-stranded DNA into large acid-insoluble oligonucleotides, which are then degraded further into small acid-soluble oligonucleotides. The protein is Exodeoxyribonuclease 7 large subunit of Photobacterium profundum (strain SS9).